The chain runs to 839 residues: Eukaryotic translation initiation factor 3 subunit C (839 aa).

A disordered region spans residues 1-93; sequence MSRFFVAGYN…DSDSEDEGRR (93 aa). Acidic residues-rich tracts occupy residues 14 to 27 and 34 to 58; these read SSEE…DEEL and GEQE…SDSD. Residues 585–759 form the PCI domain; it reads FHQHINLELL…AFIQFASTEP (175 aa). The disordered stretch occupies residues 783 to 839; that stretch reads EKTSSNGYGKKQPQQQQQQQQQQQQQQQQQKDLLQEDNSRFRYANVNTNNDEFQTTA. Residues 794 to 812 show a composition bias toward low complexity; that stretch reads QPQQQQQQQQQQQQQQQQQ. A compositionally biased stretch (polar residues) spans 827 to 839; the sequence is NVNTNNDEFQTTA.

This sequence belongs to the eIF-3 subunit C family. As to quaternary structure, component of the eukaryotic translation initiation factor 3 (eIF-3) complex.

Its subcellular location is the cytoplasm. In terms of biological role, component of the eukaryotic translation initiation factor 3 (eIF-3) complex, which is involved in protein synthesis of a specialized repertoire of mRNAs and, together with other initiation factors, stimulates binding of mRNA and methionyl-tRNAi to the 40S ribosome. The eIF-3 complex specifically targets and initiates translation of a subset of mRNAs involved in cell proliferation. The polypeptide is Eukaryotic translation initiation factor 3 subunit C (Scheffersomyces stipitis (strain ATCC 58785 / CBS 6054 / NBRC 10063 / NRRL Y-11545) (Yeast)).